The following is a 441-amino-acid chain: CBL-interacting serine/threonine-protein kinase 6 (441 aa).

One can recognise a Protein kinase domain in the interval 24–278 (YELGRLLGHG…IEKVMDSPWF (255 aa)). ATP-binding positions include 30-38 (LGHGTFAKV) and lysine 53. Aspartate 146 functions as the Proton acceptor in the catalytic mechanism. Residues 164 to 193 (DFGLSAFTEHLKQDGLLHTTCGTPAYVAPE) are activation loop. Position 168 is a phosphoserine (serine 168). Residue threonine 182 is modified to Phosphothreonine. An NAF domain is found at 310–334 (EETETLNAFHIIALSEGFDLSPLFE). The tract at residues 341 to 371 (KREMRFATSRPASSVISSLEEAARVGNKFDV) is PPI.

Belongs to the protein kinase superfamily. CAMK Ser/Thr protein kinase family. SNF1 subfamily. In terms of assembly, part of a K(+)-channel calcium-sensing kinase/phosphatase complex composed by a calcium sensor CBL (CBL1, CBL2, CBL3 or CBL9), a kinase CIPK (CIPK6, CIPK16 or CIPK23), a phosphatase PP2C (AIP1) and a K(+)-channel (AKT1). Interacts with AKT1, AKT2,CBL1, CBL2, CBL3, CBL4/SOS3 and CBL9. It depends on Mn(2+) as a cofactor. Autophosphorylated. Expressed in roots and shoots.

It is found in the endoplasmic reticulum. It carries out the reaction L-seryl-[protein] + ATP = O-phospho-L-seryl-[protein] + ADP + H(+). It catalyses the reaction L-threonyl-[protein] + ATP = O-phospho-L-threonyl-[protein] + ADP + H(+). Its function is as follows. CIPK serine-threonine protein kinases interact with CBL proteins. Binding of a CBL protein to the regulatory NAF domain of CIPK protein lead to the activation of the kinase in a calcium-dependent manner. Downstream of CBL1, CBL2, CBL3 and CBL9, regulates by phosphorylation the K(+) conductance and uptake of AKT1. Binds to CBL4 to modulate AKT2 activity by promoting a kinase interaction-dependent but phosphorylation-independent translocation of the channel to the plasma membrane. In Arabidopsis thaliana (Mouse-ear cress), this protein is CBL-interacting serine/threonine-protein kinase 6 (CIPK6).